Consider the following 225-residue polypeptide: Triosephosphate isomerase (225 aa).

Substrate is bound at residue 9-11; it reads NMK. Catalysis depends on His93, which acts as the Electrophile. The active-site Proton acceptor is Glu141. Residues Ile146, Gly181, and 202 to 203 each bind substrate; that span reads AS.

This sequence belongs to the triosephosphate isomerase family. As to quaternary structure, homotetramer; dimer of dimers.

The protein localises to the cytoplasm. It catalyses the reaction D-glyceraldehyde 3-phosphate = dihydroxyacetone phosphate. It functions in the pathway carbohydrate biosynthesis; gluconeogenesis. The protein operates within carbohydrate degradation; glycolysis; D-glyceraldehyde 3-phosphate from glycerone phosphate: step 1/1. Functionally, involved in the gluconeogenesis. Catalyzes stereospecifically the conversion of dihydroxyacetone phosphate (DHAP) to D-glyceraldehyde-3-phosphate (G3P). This Caldivirga maquilingensis (strain ATCC 700844 / DSM 13496 / JCM 10307 / IC-167) protein is Triosephosphate isomerase.